The chain runs to 177 residues: MFDFAWSEIAVIGVVALVVIGPKDIPGAVRGVARMVRKARSMAAEFQGQMDQMMKEADLGDVRETFNDLRGVNLRQQLSRTLDPDGSMRSTFDNNPMAPSPAPMIMGGDEAHMVEERPFHSLSVMDESHMASEWTREKTVSSETARRAATAPAFIPPGEAFRSARRAPAFIPPADQG.

The chain crosses the membrane as a helical span at residues 1 to 21 (MFDFAWSEIAVIGVVALVVIG). Over residues 136-146 (REKTVSSETAR) the composition is skewed to basic and acidic residues. A disordered region spans residues 136–177 (REKTVSSETARRAATAPAFIPPGEAFRSARRAPAFIPPADQG).

It belongs to the TatB family. As to quaternary structure, the Tat system comprises two distinct complexes: a TatABC complex, containing multiple copies of TatA, TatB and TatC subunits, and a separate TatA complex, containing only TatA subunits. Substrates initially bind to the TatABC complex, which probably triggers association of the separate TatA complex to form the active translocon.

Its subcellular location is the cell inner membrane. Functionally, part of the twin-arginine translocation (Tat) system that transports large folded proteins containing a characteristic twin-arginine motif in their signal peptide across membranes. Together with TatC, TatB is part of a receptor directly interacting with Tat signal peptides. TatB may form an oligomeric binding site that transiently accommodates folded Tat precursor proteins before their translocation. The polypeptide is Sec-independent protein translocase protein TatB (Granulibacter bethesdensis (strain ATCC BAA-1260 / CGDNIH1)).